Consider the following 125-residue polypeptide: MSYTALAVTFFGWLALSSACYIQNCPIGGKRSVIDFMDVRKCIPCGPRNKGHCFGPNICCGEELGCYFGTTETLRCQEENFLPSPCESGRKPCGNNGGNCARSGICCNHESCTMDPACEQDSVFS.

Residues 1–19 (MSYTALAVTFFGWLALSSA) form the signal peptide. Cys20 and Cys25 are joined by a disulfide. Gly28 is modified (glycine amide). Disulfide bonds link Cys42/Cys86, Cys45/Cys59, Cys53/Cys76, Cys60/Cys66, Cys93/Cys106, Cys100/Cys118, and Cys107/Cys112.

It belongs to the vasopressin/oxytocin family. Mesotocin is produced by magnocellular preoptic neurons in the hypothalamus in amphibians, reptiles and birds.

It is found in the secreted. Its function is as follows. Mesotocin is a diuretic hormone. The chain is Mesotocin-neurophysin MT from Bufo japonicus (Japanese common toad).